The chain runs to 944 residues: Bifunctional uridylyltransferase/uridylyl-removing enzyme (944 aa).

The uridylyltransferase stretch occupies residues 1–371 (MRDLDFTNIL…RFTHRNRKIA (371 aa)). The interval 372-727 (GSVEFVEDRG…VRTDSFHAIT (356 aa)) is uridylyl-removing. The HD domain occupies 488 to 604 (VDEHLIRTVD…TDFADRVQSL (117 aa)). 2 consecutive ACT domains span residues 728 to 809 (EITV…EVIA) and 839 to 918 (VIEV…LRER). Residues 911-944 (EEDELRERMPSGIIAPAATARTPPASEKKAGSPI) form a disordered region. Residues 925 to 935 (APAATARTPPA) show a composition bias toward low complexity.

This sequence belongs to the GlnD family. The cofactor is Mg(2+).

It catalyses the reaction [protein-PII]-L-tyrosine + UTP = [protein-PII]-uridylyl-L-tyrosine + diphosphate. The enzyme catalyses [protein-PII]-uridylyl-L-tyrosine + H2O = [protein-PII]-L-tyrosine + UMP + H(+). With respect to regulation, uridylyltransferase (UTase) activity is inhibited by glutamine, while glutamine likely activates uridylyl-removing (UR) activity. Functionally, modifies, by uridylylation and deuridylylation, the PII regulatory proteins GlnB and GlnK, in response to the nitrogen status of the cell that GlnD senses through the glutamine level. Under low glutamine levels, catalyzes the conversion of the PII proteins and UTP to PII-UMP and PPi, while under higher glutamine levels, GlnD likely hydrolyzes PII-UMP to PII and UMP (deuridylylation). Thus, controls uridylylation state and activity of the PII proteins, and plays an important role in the regulation of nitrogen metabolism. The polypeptide is Bifunctional uridylyltransferase/uridylyl-removing enzyme (Rhizobium leguminosarum bv. viciae).